The sequence spans 437 residues: GTPase Obg (437 aa).

Residues 2-160 (SMFLDTAKIS…RQLELELKIL (159 aa)) enclose the Obg domain. Positions 161 to 338 (ADVGLVGFPS…LLEATAELLA (178 aa)) constitute an OBG-type G domain. Residues 167 to 174 (GFPSVGKS), 192 to 196 (FTTIV), 214 to 217 (DLPG), 284 to 287 (NKMD), and 319 to 321 (SSL) each bind GTP. The Mg(2+) site is built by Ser-174 and Thr-194. In terms of domain architecture, OCT spans 359 to 437 (GFAEAEKEFE…IGKFEFEFVD (79 aa)).

This sequence belongs to the TRAFAC class OBG-HflX-like GTPase superfamily. OBG GTPase family. Monomer. The cofactor is Mg(2+).

It localises to the cytoplasm. Its function is as follows. An essential GTPase which binds GTP, GDP and possibly (p)ppGpp with moderate affinity, with high nucleotide exchange rates and a fairly low GTP hydrolysis rate. Plays a role in control of the cell cycle, stress response, ribosome biogenesis and in those bacteria that undergo differentiation, in morphogenesis control. This Streptococcus pyogenes serotype M3 (strain ATCC BAA-595 / MGAS315) protein is GTPase Obg.